The following is a 165-amino-acid chain: Pyruvoyl-dependent arginine decarboxylase 1 (165 aa).

Position 45 is a pyruvic acid (Ser) (Ser45).

Belongs to the PdaD family. Pyruvate serves as cofactor.

It carries out the reaction L-arginine + H(+) = agmatine + CO2. This chain is Pyruvoyl-dependent arginine decarboxylase 1 (pdaD1), found in Methanosarcina mazei (strain ATCC BAA-159 / DSM 3647 / Goe1 / Go1 / JCM 11833 / OCM 88) (Methanosarcina frisia).